A 635-amino-acid polypeptide reads, in one-letter code: Extracellular metalloproteinase MEP (635 aa).

Positions 1–19 (MRAFLLASLASLPAVNVYA) are cleaved as a signal peptide. Positions 20–244 (HPTHNSRGLT…VHAVVDYAAE (225 aa)) are excised as a propeptide. Asparagine 287, asparagine 302, and asparagine 336 each carry an N-linked (GlcNAc...) asparagine glycan. Residue histidine 429 coordinates Zn(2+). Glutamate 430 is a catalytic residue. Position 433 (histidine 433) interacts with Zn(2+).

The protein belongs to the peptidase M36 family. Requires Zn(2+) as cofactor.

The protein localises to the secreted. Secreted metalloproteinase that allows assimilation of proteinaceous substrates. The sequence is that of Extracellular metalloproteinase MEP (MEP) from Leptosphaeria maculans (strain JN3 / isolate v23.1.3 / race Av1-4-5-6-7-8) (Blackleg fungus).